Here is a 162-residue protein sequence, read N- to C-terminus: Tegument protein BLRF2 (162 aa).

The stretch at 12-43 (VKAVDMSMEDMAARLARLESENKALKQQVLRG) forms a coiled coil. Positions 121–162 (GAKGQPSPGEGTRLRESNDPNATRRARSRSRGREAKKVQISD) are disordered. Residues 151–162 (RGREAKKVQISD) are compositionally biased toward basic and acidic residues.

This sequence belongs to the herpesviridae BLRF2 family. In terms of assembly, homooligomer; homooligomerizes and binds double-stranded DNA (dsDNA) cooperatively. Interacts with host CGAS.

Its subcellular location is the virion tegument. The protein resides in the host cytoplasm. Plays a role in the inhibition of host innate immune system by targeting the CGAS enzymatic activity which is the principal cytosolic DNA sensor that detects invading viral DNA. Acts by inhibiting CGAS-DNA phase separation: directly binds double-stranded DNA (dsDNA) in a length dependent but sequence independent manner and is able to form DNA-induced phase separation in infected cells. DNA phase separation of ORF52 mediates disruption of liquid-like droplets in which CGAS is activated, thereby preventing CGAS activity. In Epstein-Barr virus (strain GD1) (HHV-4), this protein is Tegument protein BLRF2.